A 756-amino-acid chain; its full sequence is Ent-kaurene synthase, chloroplastic (756 aa).

The Mg(2+) site is built by Asp507 and Asp511. Residues 507 to 511 (DDFFD) carry the DDXXD motif motif. Residues 606–622 (YVSFALGPIVLPCLYLV) traverse the membrane as a helical segment. 3 residues coordinate Mg(2+): Asn651, Thr655, and Glu659.

It belongs to the terpene synthase family. Requires Mg(2+) as cofactor. Present in both leaves and flowers.

The protein resides in the plastid. Its subcellular location is the chloroplast membrane. The catalysed reaction is ent-copalyl diphosphate = ent-kaur-16-ene + diphosphate. Its pathway is plant hormone biosynthesis; gibberellin biosynthesis. Involved in the biosynthesis of labdane-type diterpenoid including marrubiin and other labdane-related furanoid diterpenoids with potential applications as anti-diabetics, analgesics or vasorelaxants. Terpene synthase that produces ent-kaurene from ent-copalyl diphosphate (ent-CPP). The sequence is that of Ent-kaurene synthase, chloroplastic from Marrubium vulgare (White horehound).